The chain runs to 525 residues: GMP synthase [glutamine-hydrolyzing] (525 aa).

One can recognise a Glutamine amidotransferase type-1 domain in the interval 9–207 (RILILDFGSQ…VVDICKCEKL (199 aa)). The active-site Nucleophile is the cysteine 86. Catalysis depends on residues histidine 181 and glutamate 183. The GMPS ATP-PPase domain occupies 208 to 400 (WTSASIIDDA…LGLPYDMLYR (193 aa)). 235-241 (SGGVDSS) is an ATP binding site.

As to quaternary structure, homodimer.

The enzyme catalyses XMP + L-glutamine + ATP + H2O = GMP + L-glutamate + AMP + diphosphate + 2 H(+). Its pathway is purine metabolism; GMP biosynthesis; GMP from XMP (L-Gln route): step 1/1. Functionally, catalyzes the synthesis of GMP from XMP. The chain is GMP synthase [glutamine-hydrolyzing] from Colwellia psychrerythraea (strain 34H / ATCC BAA-681) (Vibrio psychroerythus).